The following is a 311-amino-acid chain: GTP cyclohydrolase FolE2 (311 aa).

The protein belongs to the GTP cyclohydrolase IV family.

The enzyme catalyses GTP + H2O = 7,8-dihydroneopterin 3'-triphosphate + formate + H(+). The protein operates within cofactor biosynthesis; 7,8-dihydroneopterin triphosphate biosynthesis; 7,8-dihydroneopterin triphosphate from GTP: step 1/1. Functionally, converts GTP to 7,8-dihydroneopterin triphosphate. In Hydrogenovibrio crunogenus (strain DSM 25203 / XCL-2) (Thiomicrospira crunogena), this protein is GTP cyclohydrolase FolE2.